Consider the following 618-residue polypeptide: Chaperone protein HscA homolog (618 aa).

The protein belongs to the heat shock protein 70 family.

Its function is as follows. Chaperone involved in the maturation of iron-sulfur cluster-containing proteins. Has a low intrinsic ATPase activity which is markedly stimulated by HscB. This is Chaperone protein HscA homolog from Variovorax paradoxus (strain S110).